The primary structure comprises 895 residues: Histone-lysine N-methyltransferase EZ3 (895 aa).

A compositionally biased stretch (low complexity) spans 1 to 13 (MASSSKASDSSSQ). Disordered regions lie at residues 1–30 (MASSSKASDSSSQRSKRSDQGTGREAAPAS) and 396–446 (SSVS…PGKR). Residues 396–422 (SSVSAEESTTPPSADTSETENASSDMP) are compositionally biased toward polar residues. A compositionally biased stretch (basic residues) spans 427 to 436 (RKYKISKRGP). In terms of domain architecture, SANT spans 528–578 (TLSCWSALERDLYLKGIEIFGKNSCLIARNLLSGMKTCMEVANYMYNNGAA). The 105-residue stretch at 628 to 732 (AGHPTVRKRI…SLGEPPARGD (105 aa)) folds into the CXC domain. The SET domain maps to 747 to 862 (QRILLGRSDV…ASEELFYDYR (116 aa)). Residues 870 to 895 (AWARRPEGSKKDEASVSHHRAHKVAR) form a disordered region. The segment covering 873-885 (RRPEGSKKDEASV) has biased composition (basic and acidic residues). Residues 886–895 (SHHRAHKVAR) show a composition bias toward basic residues.

This sequence belongs to the class V-like SAM-binding methyltransferase superfamily. Histone-lysine methyltransferase family. EZ subfamily. As to expression, widely expressed.

Its subcellular location is the nucleus. The enzyme catalyses L-lysyl(27)-[histone H3] + 3 S-adenosyl-L-methionine = N(6),N(6),N(6)-trimethyl-L-lysyl(27)-[histone H3] + 3 S-adenosyl-L-homocysteine + 3 H(+). Its function is as follows. Polycomb group (PcG) protein. Catalytic subunit of some PcG multiprotein complex, which methylates 'Lys-27' of histone H3, leading to transcriptional repression of the affected target genes. PcG proteins are not required to initiate repression, but to maintain it during later stages of development. The polypeptide is Histone-lysine N-methyltransferase EZ3 (EZ3) (Zea mays (Maize)).